Here is a 284-residue protein sequence, read N- to C-terminus: uncharacterized protein (284 aa).

The tract at residues 236–284 (IDITNEADSSEIIDSEPSNKDETEKPSAQETDPFDGKPVDIKDDELPFD) is disordered. 2 stretches are compositionally biased toward basic and acidic residues: residues 252 to 262 (PSNKDETEKPS) and 269 to 284 (FDGK…LPFD).

This is an uncharacterized protein from Bacillus subtilis (strain 168).